A 273-amino-acid polypeptide reads, in one-letter code: Ribosomal RNA small subunit methyltransferase A (273 aa).

6 residues coordinate S-adenosyl-L-methionine: N19, L21, G46, E67, D92, and N113.

This sequence belongs to the class I-like SAM-binding methyltransferase superfamily. rRNA adenine N(6)-methyltransferase family. RsmA subfamily.

It localises to the cytoplasm. It carries out the reaction adenosine(1518)/adenosine(1519) in 16S rRNA + 4 S-adenosyl-L-methionine = N(6)-dimethyladenosine(1518)/N(6)-dimethyladenosine(1519) in 16S rRNA + 4 S-adenosyl-L-homocysteine + 4 H(+). Its function is as follows. Specifically dimethylates two adjacent adenosines (A1518 and A1519) in the loop of a conserved hairpin near the 3'-end of 16S rRNA in the 30S particle. May play a critical role in biogenesis of 30S subunits. In Hahella chejuensis (strain KCTC 2396), this protein is Ribosomal RNA small subunit methyltransferase A.